The following is a 796-amino-acid chain: Vacuolar protein sorting-associated protein 35 (796 aa).

Residue Ser7 is modified to Phosphoserine. Interaction with SNX3 stretches follow at residues Val25–Lys44 and Asp205–Glu215. Residues Cys438 to Leu796 form an interaction with SLC11A2 region. Residues Ser500–Gly693 form an interaction with IGF2R cytoplasmic domain region. Position 783 is a phosphoserine (Ser783). Phosphotyrosine is present on Tyr791.

The protein belongs to the VPS35 family. In terms of assembly, component of the heterotrimeric retromer cargo-selective complex (CSC), also decribed as vacuolar protein sorting subcomplex (VPS), formed by VPS26 (VPS26A or VPS26B), VPS29 and VPS35. The CSC has a highly elongated structure with VPS26 and VPS29 binding independently at opposite distal ends of VPS35 as central platform. The CSC is believed to associate with variable sorting nexins to form functionally distinct retromer complex variants. The originally described retromer complex (also called SNX-BAR retromer) is a pentamer containing the CSC and a heterodimeric membrane-deforming subcomplex formed between SNX1 or SNX2 and SNX5 or SNX6 (also called SNX-BAR subcomplex); the respective CSC and SNX-BAR subcomplexes associate with low affinity. The CSC associates with SNX3 to form a SNX3-retromer complex. The CSC associates with SNX27, the WASH complex and the SNX-BAR subcomplex to form the SNX27-retromer complex. Interacts with VPS26A, VPS26B, VPS29, SNX1, SNX2, IGF2R, SNX3, GOLPH3, LRRK2, SLC11A2, WASHC2A, WASHC2C, FKBP15, WASHC1, RAB7A, SNX27, WASHC5, EHD1. Interacts with MAGEL2; leading to recruitment of the TRIM27:MAGEL2 E3 ubiquitin ligase complex retromer-containing endosomes. Interacts with SORCS2. (Microbial infection) Interacts with human papillomavirus 16 minor capsid protein L2 (via C-terminus); this interaction mediates the transport of the capsid from the early endosome to the Golgi apparatus. In terms of tissue distribution, ubiquitous. Highly expressed in heart, brain, placenta, skeletal muscle, spleen, thymus, testis, ovary, small intestine, kidney and colon.

It localises to the cytoplasm. It is found in the membrane. The protein localises to the endosome. Its subcellular location is the early endosome. The protein resides in the late endosome. Functionally, acts as a component of the retromer cargo-selective complex (CSC). The CSC is believed to be the core functional component of retromer or respective retromer complex variants acting to prevent missorting of selected transmembrane cargo proteins into the lysosomal degradation pathway. The recruitment of the CSC to the endosomal membrane involves RAB7A and SNX3. The CSC seems to associate with the cytoplasmic domain of cargo proteins predominantly via VPS35; however, these interactions seem to be of low affinity and retromer SNX proteins may also contribute to cargo selectivity thus questioning the classical function of the CSC. The SNX-BAR retromer mediates retrograde transport of cargo proteins from endosomes to the trans-Golgi network (TGN) and is involved in endosome-to-plasma membrane transport for cargo protein recycling. The SNX3-retromer mediates the retrograde endosome-to-TGN transport of WLS distinct from the SNX-BAR retromer pathway. The SNX27-retromer is believed to be involved in endosome-to-plasma membrane trafficking and recycling of a broad spectrum of cargo proteins. The CSC seems to act as recruitment hub for other proteins, such as the WASH complex and TBC1D5. Required for retrograde transport of lysosomal enzyme receptor IGF2R and SLC11A2. Required to regulate transcytosis of the polymeric immunoglobulin receptor (pIgR-pIgA). Required for endosomal localization of WASHC2C. Mediates the association of the CSC with the WASH complex via WASHC2. Required for the endosomal localization of TBC1D5. (Microbial infection) The heterotrimeric retromer cargo-selective complex (CSC) mediates the exit of human papillomavirus from the early endosome and the delivery to the Golgi apparatus. The chain is Vacuolar protein sorting-associated protein 35 from Homo sapiens (Human).